The following is a 932-amino-acid chain: Valine--tRNA ligase (932 aa).

The 'HIGH' region signature appears at 75-85 (PNVTGQLHMGH). The 'KMSKS' region signature appears at 568–572 (KMSKS). K571 provides a ligand contact to ATP. Positions 863 to 929 (TVDVAAERKR…ERITARLEGL (67 aa)) form a coiled coil.

This sequence belongs to the class-I aminoacyl-tRNA synthetase family. ValS type 1 subfamily. As to quaternary structure, monomer.

The protein localises to the cytoplasm. It carries out the reaction tRNA(Val) + L-valine + ATP = L-valyl-tRNA(Val) + AMP + diphosphate. Functionally, catalyzes the attachment of valine to tRNA(Val). As ValRS can inadvertently accommodate and process structurally similar amino acids such as threonine, to avoid such errors, it has a 'posttransfer' editing activity that hydrolyzes mischarged Thr-tRNA(Val) in a tRNA-dependent manner. This is Valine--tRNA ligase from Corynebacterium jeikeium (strain K411).